The primary structure comprises 403 residues: Peptidyl-prolyl cis-trans isomerase FKBP8 (403 aa).

The disordered stretch occupies residues 26–54 (VLDGVDDAEEEDDLSGLPPLEDMGQPTVE). A compositionally biased stretch (acidic residues) spans 28–39 (DGVDDAEEEDDL). Residues 110–195 (GQVVTVHLQM…CLEVTLKTAE (86 aa)) enclose the PPIase FKBP-type domain. The stretch at 212–245 (ANRKRECGNAHYQRADFVLAANSYDLAIKAITSN) is one TPR 1 repeat. Glycyl lysine isopeptide (Lys-Gly) (interchain with G-Cter in ubiquitin) cross-links involve residues lysine 240, lysine 262, lysine 264, and lysine 275. TPR repeat units follow at residues 263–296 (VKCL…QPDN) and 297–330 (IKAL…EPSN). Serine 287 carries the phosphoserine modification. Glycyl lysine isopeptide (Lys-Gly) (interchain with G-Cter in ubiquitin) cross-links involve residues lysine 298, lysine 305, lysine 325, lysine 331, lysine 339, lysine 342, and lysine 343. Residues 381–401 (WLFGATAVALGGVALSVVIAA) traverse the membrane as a helical segment.

As to quaternary structure, homomultimers or heteromultimers (Potential). Forms heterodimer with calmodulin. When activated by calmodulin and calcium, interacts with the BH4 domain of BCL2 and weakly with BCLX isoform Bcl-X(L). Does not bind and inhibit calcineurin. Interacts with ZFYVE27; may negatively regulate ZFYVE27 phosphorylation. Ca(2+) serves as cofactor. In terms of processing, ubiquitinated by PRKN during mitophagy, leading to its degradation and enhancement of mitophagy. Deubiquitinated by USP30.

It is found in the mitochondrion membrane. The catalysed reaction is [protein]-peptidylproline (omega=180) = [protein]-peptidylproline (omega=0). Its function is as follows. Constitutively inactive PPiase, which becomes active when bound to calmodulin and calcium. Seems to act as a chaperone for BCL2, targets it to the mitochondria and modulates its phosphorylation state. The BCL2/FKBP8/calmodulin/calcium complex probably interferes with the binding of BCL2 to its targets. The active form of FKBP8 may therefore play a role in the regulation of apoptosis. This chain is Peptidyl-prolyl cis-trans isomerase FKBP8 (Fkbp8), found in Rattus norvegicus (Rat).